A 679-amino-acid chain; its full sequence is Glycine--tRNA ligase beta subunit (679 aa).

This sequence belongs to the class-II aminoacyl-tRNA synthetase family. Tetramer of two alpha and two beta subunits.

It localises to the cytoplasm. It carries out the reaction tRNA(Gly) + glycine + ATP = glycyl-tRNA(Gly) + AMP + diphosphate. This chain is Glycine--tRNA ligase beta subunit, found in Streptococcus equi subsp. zooepidemicus (strain H70).